Reading from the N-terminus, the 230-residue chain is Aspartate and serine-rich protein (230 aa).

3 N-linked (GlcNAc...) asparagine glycosylation sites follow: Asn-17, Asn-132, and Asn-139. Residues 112 to 230 are disordered; the sequence is LNGGATAGGV…DSDSNDTDSD (119 aa). The segment covering 126–140 has biased composition (acidic residues); sequence DTDESSNDTDEDSND. Residues 141 to 161 are compositionally biased toward basic and acidic residues; sequence SDSKDTDSDSKDTDSDSKDSD. Asn-163 and Asn-170 each carry an N-linked (GlcNAc...) asparagine glycan. A compositionally biased stretch (basic and acidic residues) spans 173–223; sequence DSKDTDSDSKDSDSKDTDSDSKDTDSDSKDSDSKDTDSDSKDTDSDSKDSD. An N-linked (GlcNAc...) asparagine glycan is attached at Asn-225.

As to expression, component of the acid-insoluble organic matrix of calcified layers of the shell (at protein level).

The protein resides in the secreted. The polypeptide is Aspartate and serine-rich protein (Lottia gigantea (Giant owl limpet)).